The primary structure comprises 119 residues: Large ribosomal subunit protein uL18 (119 aa).

Residues 1–20 (MISKPDKNKTRQKRHTRVRG) are disordered. Residues 10 to 20 (TRQKRHTRVRG) show a composition bias toward basic residues.

This sequence belongs to the universal ribosomal protein uL18 family. Part of the 50S ribosomal subunit; part of the 5S rRNA/L5/L18/L25 subcomplex. Contacts the 5S and 23S rRNAs.

In terms of biological role, this is one of the proteins that bind and probably mediate the attachment of the 5S RNA into the large ribosomal subunit, where it forms part of the central protuberance. The polypeptide is Large ribosomal subunit protein uL18 (Latilactobacillus sakei subsp. sakei (strain 23K) (Lactobacillus sakei subsp. sakei)).